The chain runs to 89 residues: Aminoacyl carrier protein 2 (89 aa).

The Carrier domain maps to 6–84; that stretch reads INVQNRVLSV…AMERMILNQL (79 aa). O-(pantetheine 4'-phosphoryl)serine is present on Ser-42.

Post-translationally, 4'-phosphopantetheine is transferred from CoA to a specific serine of the apo-form of this carrier protein.

Its function is as follows. Aminoacyl carrier protein. Can be charged with L-glycine via the formation of a thioester bond between the amino acid and the 4'-phosphopantetheinyl prosthetic group, catalyzed by the bll6282 ligase. The sequence is that of Aminoacyl carrier protein 2 from Bradyrhizobium diazoefficiens (strain JCM 10833 / BCRC 13528 / IAM 13628 / NBRC 14792 / USDA 110).